The sequence spans 264 residues: Thymidylate synthase (264 aa).

Arginine 21 is a dUMP binding site. Histidine 51 is a (6R)-5,10-methylene-5,6,7,8-tetrahydrofolate binding site. DUMP is bound at residue 126–127 (RR). The active-site Nucleophile is the cysteine 146. DUMP is bound by residues 166–169 (RSAD), asparagine 177, and 207–209 (HLY). Residue aspartate 169 participates in (6R)-5,10-methylene-5,6,7,8-tetrahydrofolate binding. Serine 263 is a binding site for (6R)-5,10-methylene-5,6,7,8-tetrahydrofolate.

The protein belongs to the thymidylate synthase family. Bacterial-type ThyA subfamily. As to quaternary structure, homodimer.

Its subcellular location is the cytoplasm. The enzyme catalyses dUMP + (6R)-5,10-methylene-5,6,7,8-tetrahydrofolate = 7,8-dihydrofolate + dTMP. It participates in pyrimidine metabolism; dTTP biosynthesis. Catalyzes the reductive methylation of 2'-deoxyuridine-5'-monophosphate (dUMP) to 2'-deoxythymidine-5'-monophosphate (dTMP) while utilizing 5,10-methylenetetrahydrofolate (mTHF) as the methyl donor and reductant in the reaction, yielding dihydrofolate (DHF) as a by-product. This enzymatic reaction provides an intracellular de novo source of dTMP, an essential precursor for DNA biosynthesis. The protein is Thymidylate synthase of Neisseria gonorrhoeae (strain ATCC 700825 / FA 1090).